A 402-amino-acid polypeptide reads, in one-letter code: O-glucosyltransferase rumi homolog (402 aa).

Positions 1-20 are cleaved as a signal peptide; it reads MPYLEIVLALLVLSFQLGHS. 4 cysteine pairs are disulfide-bonded: Cys67–Cys74, Cys72–Cys375, Cys118–Cys124, and Cys279–Cys302. Asn71 carries N-linked (GlcNAc...) asparagine glycosylation. The active-site Proton donor/acceptor is the Asp149. Positions 189-194 are interaction with the consensus sequence C-X-S-X-[PA]-C in peptide substrates; sequence AISLYP. Residues 226–230, Arg234, 273–275, and 291–295 each bind UDP-alpha-D-glucose; these read RGSRT, VRL, and AASFR.

It belongs to the glycosyltransferase 90 family.

Its subcellular location is the endoplasmic reticulum lumen. It is found in the secreted. It functions in the pathway protein modification; protein glycosylation. In terms of biological role, protein O-glucosyltransferase. Catalyzes the reaction that attaches glucose through an O-glycosidic linkage to a conserved serine residue found in the consensus sequence C-X-S-X-[PA]-C in epidermal growth factor-like repeats. Regulates Notch signaling by glucosylating Notch in the ER, glucosylation is required for the correct folding and cleavage of Notch. The polypeptide is O-glucosyltransferase rumi homolog (Aedes aegypti (Yellowfever mosquito)).